Reading from the N-terminus, the 416-residue chain is Diaminopimelate decarboxylase (416 aa).

Lys-60 carries the post-translational modification N6-(pyridoxal phosphate)lysine. Pyridoxal 5'-phosphate-binding positions include Gly-240 and 274–277 (EPGR). Substrate contacts are provided by Arg-277, Arg-313, and Tyr-317. The active-site Proton donor is the Cys-343. The substrate site is built by Glu-344 and Tyr-371. Tyr-371 serves as a coordination point for pyridoxal 5'-phosphate.

The protein belongs to the Orn/Lys/Arg decarboxylase class-II family. LysA subfamily. In terms of assembly, homodimer. The cofactor is pyridoxal 5'-phosphate.

The enzyme catalyses meso-2,6-diaminopimelate + H(+) = L-lysine + CO2. The protein operates within amino-acid biosynthesis; L-lysine biosynthesis via DAP pathway; L-lysine from DL-2,6-diaminopimelate: step 1/1. Functionally, specifically catalyzes the decarboxylation of meso-diaminopimelate (meso-DAP) to L-lysine. This chain is Diaminopimelate decarboxylase, found in Pseudomonas fluorescens.